The primary structure comprises 195 residues: Probable GTP-binding protein EngB (195 aa).

One can recognise an EngB-type G domain in the interval 24-195 (GLTEVALSGR…EIWNFIETYI (172 aa)). Residues 32-39 (GRSNVGKS), 59-63 (GKTQT), 77-80 (DVPG), 144-147 (TKED), and 176-178 (YSS) contribute to the GTP site. Mg(2+) contacts are provided by S39 and T61.

It belongs to the TRAFAC class TrmE-Era-EngA-EngB-Septin-like GTPase superfamily. EngB GTPase family. Mg(2+) serves as cofactor.

Its function is as follows. Necessary for normal cell division and for the maintenance of normal septation. The chain is Probable GTP-binding protein EngB from Staphylococcus epidermidis (strain ATCC 35984 / DSM 28319 / BCRC 17069 / CCUG 31568 / BM 3577 / RP62A).